We begin with the raw amino-acid sequence, 730 residues long: Wall-associated receptor kinase-like 3 (730 aa).

The first 25 residues, M1–A25, serve as a signal peptide directing secretion. The Extracellular portion of the chain corresponds to A26–V357. N32, N38, N68, N90, N119, N132, N212, N233, and N269 each carry an N-linked (GlcNAc...) asparagine glycan. Residues C283–C340 are atypical EGF-like. Cystine bridges form between C285–C298, C320–C331, and C326–C340. The chain crosses the membrane as a helical span at residues L358 to I378. At R379–S730 the chain is on the cytoplasmic side. The Protein kinase domain occupies F428–I699. ATP contacts are provided by residues L434–V442 and K456. Catalysis depends on D553, which acts as the Proton acceptor. The segment at P703–S730 is disordered. The span at N712–L721 shows a compositional bias: acidic residues.

This sequence belongs to the protein kinase superfamily. Ser/Thr protein kinase family. As to expression, preferentially expressed in roots and flowers.

The protein resides in the membrane. The catalysed reaction is L-seryl-[protein] + ATP = O-phospho-L-seryl-[protein] + ADP + H(+). The enzyme catalyses L-threonyl-[protein] + ATP = O-phospho-L-threonyl-[protein] + ADP + H(+). In terms of biological role, serine/threonine-protein kinase that may function as a signaling receptor of extracellular matrix component. The sequence is that of Wall-associated receptor kinase-like 3 (WAKL3) from Arabidopsis thaliana (Mouse-ear cress).